Consider the following 284-residue polypeptide: Bifunctional protein FolD (284 aa).

NADP(+) contacts are provided by residues 165-167 (GAS), Ser190, and Ile231.

The protein belongs to the tetrahydrofolate dehydrogenase/cyclohydrolase family. As to quaternary structure, homodimer.

The catalysed reaction is (6R)-5,10-methylene-5,6,7,8-tetrahydrofolate + NADP(+) = (6R)-5,10-methenyltetrahydrofolate + NADPH. The enzyme catalyses (6R)-5,10-methenyltetrahydrofolate + H2O = (6R)-10-formyltetrahydrofolate + H(+). Its pathway is one-carbon metabolism; tetrahydrofolate interconversion. Its function is as follows. Catalyzes the oxidation of 5,10-methylenetetrahydrofolate to 5,10-methenyltetrahydrofolate and then the hydrolysis of 5,10-methenyltetrahydrofolate to 10-formyltetrahydrofolate. This Polynucleobacter asymbioticus (strain DSM 18221 / CIP 109841 / QLW-P1DMWA-1) (Polynucleobacter necessarius subsp. asymbioticus) protein is Bifunctional protein FolD.